A 461-amino-acid chain; its full sequence is Alpha-L-fucosidase (461 aa).

The N-terminal stretch at 1–18 (MKMIIIFFILLILNLIKS) is a signal peptide.

Belongs to the glycosyl hydrolase 29 family.

It catalyses the reaction an alpha-L-fucoside + H2O = L-fucose + an alcohol. Functionally, alpha-L-fucosidase is responsible for hydrolyzing the alpha-1,6-linked fucose joined to the reducing-end N-acetylglucosamine of the carbohydrate moieties of glycoproteins. This is Alpha-L-fucosidase (alfA) from Dictyostelium discoideum (Social amoeba).